A 437-amino-acid polypeptide reads, in one-letter code: CCA-adding enzyme (437 aa).

ATP is bound by residues serine 50 and lysine 53. Positions 50 and 53 each coordinate CTP. 3 residues coordinate Mg(2+): aspartate 61, aspartate 63, and aspartate 112. The ATP site is built by histidine 135, lysine 155, and tyrosine 164. The CTP site is built by histidine 135, lysine 155, and tyrosine 164.

The protein belongs to the tRNA nucleotidyltransferase/poly(A) polymerase family. Archaeal CCA-adding enzyme subfamily. Homodimer. Mg(2+) is required as a cofactor.

It carries out the reaction a tRNA precursor + 2 CTP + ATP = a tRNA with a 3' CCA end + 3 diphosphate. The enzyme catalyses a tRNA with a 3' CCA end + 2 CTP + ATP = a tRNA with a 3' CCACCA end + 3 diphosphate. In terms of biological role, catalyzes the addition and repair of the essential 3'-terminal CCA sequence in tRNAs without using a nucleic acid template. Adds these three nucleotides in the order of C, C, and A to the tRNA nucleotide-73, using CTP and ATP as substrates and producing inorganic pyrophosphate. tRNA 3'-terminal CCA addition is required both for tRNA processing and repair. Also involved in tRNA surveillance by mediating tandem CCA addition to generate a CCACCA at the 3' terminus of unstable tRNAs. While stable tRNAs receive only 3'-terminal CCA, unstable tRNAs are marked with CCACCA and rapidly degraded. The sequence is that of CCA-adding enzyme from Thermoplasma volcanium (strain ATCC 51530 / DSM 4299 / JCM 9571 / NBRC 15438 / GSS1).